A 123-amino-acid polypeptide reads, in one-letter code: Small ribosomal subunit protein uS12 (123 aa).

D89 is subject to 3-methylthioaspartic acid. The interval 101-123 is disordered; that stretch reads TLDTQGVKDRRQRRSKYGAKRPK. Positions 110-123 are enriched in basic residues; it reads RRQRRSKYGAKRPK.

The protein belongs to the universal ribosomal protein uS12 family. As to quaternary structure, part of the 30S ribosomal subunit. Contacts proteins S8 and S17. May interact with IF1 in the 30S initiation complex.

With S4 and S5 plays an important role in translational accuracy. Functionally, interacts with and stabilizes bases of the 16S rRNA that are involved in tRNA selection in the A site and with the mRNA backbone. Located at the interface of the 30S and 50S subunits, it traverses the body of the 30S subunit contacting proteins on the other side and probably holding the rRNA structure together. The combined cluster of proteins S8, S12 and S17 appears to hold together the shoulder and platform of the 30S subunit. In Paramagnetospirillum magneticum (strain ATCC 700264 / AMB-1) (Magnetospirillum magneticum), this protein is Small ribosomal subunit protein uS12.